A 319-amino-acid chain; its full sequence is Urease accessory protein UreD (319 aa).

The interval 254–273 is disordered; it reads PDPVGSPAARRESVPAKRAE. Residues 262 to 273 are compositionally biased toward basic and acidic residues; sequence ARRESVPAKRAE.

It belongs to the UreD family. As to quaternary structure, ureD, UreF and UreG form a complex that acts as a GTP-hydrolysis-dependent molecular chaperone, activating the urease apoprotein by helping to assemble the nickel containing metallocenter of UreC. The UreE protein probably delivers the nickel.

The protein localises to the cytoplasm. Required for maturation of urease via the functional incorporation of the urease nickel metallocenter. This chain is Urease accessory protein UreD, found in Frankia casuarinae (strain DSM 45818 / CECT 9043 / HFP020203 / CcI3).